The chain runs to 236 residues: tRNA1(Val) (adenine(37)-N6)-methyltransferase (236 aa).

It belongs to the methyltransferase superfamily. tRNA (adenine-N(6)-)-methyltransferase family.

The protein resides in the cytoplasm. The catalysed reaction is adenosine(37) in tRNA1(Val) + S-adenosyl-L-methionine = N(6)-methyladenosine(37) in tRNA1(Val) + S-adenosyl-L-homocysteine + H(+). Specifically methylates the adenine in position 37 of tRNA(1)(Val) (anticodon cmo5UAC). This chain is tRNA1(Val) (adenine(37)-N6)-methyltransferase, found in Actinobacillus succinogenes (strain ATCC 55618 / DSM 22257 / CCUG 43843 / 130Z).